The primary structure comprises 517 residues: MTALTLSTAAAPGLRADAIVIGVAKGAGGPSVAPGAEAVDKAYDGRLAAVLETLGASGAEGEVTKLPAPSGFKAPVVVAVGLGAEPEKDAGFDPEALRRAAGAAARALAGAKKAAFALPLAEAADAGVVAEGLLLGAYSFDAYKASAKEAKEAKGAKAKANGNGKAPLAEAALLGGKPRDKAYKAAIERATAVAEELNRARDLVNTPPNDLDPEAFAAVAQAAAKEHGIKVQVLDEKALVKGGYGGILGVGAGSASGPRLVKLSYTSPKAKKSLAFVGKGITYDSGGISLKPAGHNETMKCDMAGAAAVFAAVVAAARLGLEVNVTGWLALAENMPSGSATRPGDVLRMYSGKTVEVLNTDAEGRLVLADALWAASQDEPDAIIDVATLTGAMMLALGSRTYGIMANDDAFRSAVHEAAEESGEPAWPMPLPEHLRKGMDSPTADIANMGERMGGGLVAGLFLREFVGEGITWAHLDIAGPAFNEGGPFGYTPKGGTGTAVRTLVRVAELAAAGELG.

Mn(2+)-binding residues include lysine 279 and aspartate 284. Lysine 291 is an active-site residue. Mn(2+)-binding residues include aspartate 302, aspartate 361, and glutamate 363. Arginine 365 is a catalytic residue.

Belongs to the peptidase M17 family. Mn(2+) is required as a cofactor.

The protein localises to the cytoplasm. It carries out the reaction Release of an N-terminal amino acid, Xaa-|-Yaa-, in which Xaa is preferably Leu, but may be other amino acids including Pro although not Arg or Lys, and Yaa may be Pro. Amino acid amides and methyl esters are also readily hydrolyzed, but rates on arylamides are exceedingly low.. It catalyses the reaction Release of an N-terminal amino acid, preferentially leucine, but not glutamic or aspartic acids.. Its function is as follows. Presumably involved in the processing and regular turnover of intracellular proteins. Catalyzes the removal of unsubstituted N-terminal amino acids from various peptides. This Streptomyces coelicolor (strain ATCC BAA-471 / A3(2) / M145) protein is Probable cytosol aminopeptidase.